Reading from the N-terminus, the 385-residue chain is 6-hydroxynicotinate 3-monooxygenase (385 aa).

The N-terminal stretch at 1-20 (MSQSPRIAVVGAGLGGAAAA) is a signal peptide. Residues Gly15, 34 to 35 (EQ), His47, Arg108, and Leu130 contribute to the FAD site. Catalysis depends on His47, which acts as the Proton acceptor. Residue Tyr215 is the Proton acceptor of the active site. FAD-binding positions include Asp294 and 307 to 308 (AA).

It belongs to the 6-hydroxynicotinate 3-monooxygenase family. In terms of assembly, monomer. It depends on FAD as a cofactor.

The enzyme catalyses 6-hydroxynicotinate + NADH + O2 + 2 H(+) = 2,5-dihydroxypyridine + CO2 + NAD(+) + H2O. Its activity is regulated as follows. Inhibited competitively by nicotinic acid with a Ki of 0.49 mM. Inhibited by thiol-specific compounds p-chloromercuribenzoate, DTNB, Ag(2)SO(4), HgCl(2), CuCl(2) and N-ethylmaleimide. No inhibition by o-phenanthroline, 8-hydroxyquinoline, EDTA, disodium 4,5-dihydroxy-m-benzenedisulfonate, fluoride, azide, KCl, LiCl, NaCl, BaCl(2), MnCl(2), MgCl(2), PBCl, ZnCl(2), CoCl(2), SnCl(2), FeSO(4), FeCl(3), NiCl(2), CdCl(2), AlCl(3), iodoacetic acid, hydro-xylamine, phenylhydrazine, semicarbazide, cysteamine, alpha,alpha-dipyridyl and urea. Functionally, flavin-dependent monooxygenase (FMO) that catalyzes the decarboxylative hydroxylation of 6-hydroxynicotinic acid (6-HNA) to 2,5-dihydroxypyridine (2,5-DHP) with concomitant oxidation of NADH, a step in the aerobic nicotinate degradation pathway. Uses NADH in preference to NADPH as an electron donor. In Pseudomonas fluorescens, this protein is 6-hydroxynicotinate 3-monooxygenase (nicC).